Reading from the N-terminus, the 61-residue chain is Metallothionein-2 (61 aa).

At Met1 the chain carries N-acetylmethionine. The interval 1–29 (MDPNCSCATDGSCSCAGSCKCKQCKCTSC) is beta. A divalent metal cation-binding residues include Cys5, Cys7, Cys13, Cys15, Cys19, Cys21, Cys24, Cys26, Cys29, Cys33, Cys34, Cys36, Cys37, Cys41, Cys44, Cys48, Cys50, and Cys57. Residues 30-61 (KKSCCSCCPVGCAKCSQGCICKEASDKCSCCA) are alpha. Phosphoserine is present on Ser58. The a divalent metal cation site is built by Cys59 and Cys60.

The protein belongs to the metallothionein superfamily. Type 1 family.

Its function is as follows. Metallothioneins have a high content of cysteine residues that bind various heavy metals; these proteins are transcriptionally regulated by both heavy metals and glucocorticoids. The polypeptide is Metallothionein-2 (Mt2) (Rattus norvegicus (Rat)).